The chain runs to 431 residues: Glutamate-1-semialdehyde 2,1-aminomutase (431 aa).

Residue Lys264 is modified to N6-(pyridoxal phosphate)lysine.

This sequence belongs to the class-III pyridoxal-phosphate-dependent aminotransferase family. HemL subfamily. In terms of assembly, homodimer. The cofactor is pyridoxal 5'-phosphate.

It localises to the cytoplasm. It carries out the reaction (S)-4-amino-5-oxopentanoate = 5-aminolevulinate. It participates in porphyrin-containing compound metabolism; protoporphyrin-IX biosynthesis; 5-aminolevulinate from L-glutamyl-tRNA(Glu): step 2/2. The sequence is that of Glutamate-1-semialdehyde 2,1-aminomutase from Clostridium beijerinckii (strain ATCC 51743 / NCIMB 8052) (Clostridium acetobutylicum).